Reading from the N-terminus, the 348-residue chain is Histone PARylation factor 1 (348 aa).

Residues 1–10 (MAGRGKRKPR) are compositionally biased toward basic residues. Residues 1 to 38 (MAGRGKRKPRSLPQTETPNGEVKKAKEGLKDDKTSVGE) are disordered. Positions 21 to 38 (EVKKAKEGLKDDKTSVGE) are enriched in basic and acidic residues. Positions 170-200 (LQKKKKEKRQQKDDAALNRLEEDLKREAERL) form a coiled coil. Residue glutamate 285 is the Proton donor of the active site.

Belongs to the HPF1 family. Interacts with PARP1 (via the PARP catalytic domain). Interacts with PARP2 (via the PARP catalytic domain). Interacts with core nucleosomes in a parp1- and parp2-dependent manner. In adult, mainly expressed in gonads.

It localises to the chromosome. The protein localises to the nucleus. Functionally, cofactor for serine ADP-ribosylation that confers serine specificity on parp1 and parp2 and plays a key role in DNA damage response. Initiates the repair of double-strand DNA breaks: recruited to DNA damage sites by parp1 and parp2 and switches the amino acid specificity of parp1 and parp2 from aspartate or glutamate to serine residues, licensing serine ADP-ribosylation of target proteins. Serine ADP-ribosylation of target proteins, such as histones, promotes decompaction of chromatin and the recruitment of repair factors leading to the reparation of DNA strand breaks. Serine ADP-ribosylation of proteins constitutes the primary form of ADP-ribosylation of proteins in response to DNA damage. Hpf1 acts by completing the active site of parp1 and parp2: forms a composite active site composed of residues from Hpf1 and parp1 or parp2. While hpf1 promotes the initiation of serine ADP-ribosylation, it restricts the polymerase activity of parp1 and parp2 in order to limit the length of poly-ADP-ribose chains. Hpf1 also promotes tyrosine ADP-ribosylation, probably by conferring tyrosine specificity on parp1. This is Histone PARylation factor 1 from Danio rerio (Zebrafish).